The chain runs to 530 residues: Calnexin homolog 1 (530 aa).

A signal peptide spans 1–20 (MRQRQLFSVFLLLLAFVSFQ). The Lumenal segment spans residues 21–466 (KLCYCDDQTV…EKAEQQPNLT (446 aa)). S34 and D65 together coordinate Ca(2+). Residues C108 and C143 are joined by a disulfide bond. The an alpha-D-glucoside site is built by Y112, K114, Y134, and D141. The disordered stretch occupies residues 216-315 (ALIPAKTIPD…KCEAAPGCGE (100 aa)). Positions 223-356 (IPDPEDKKPE…RDIPNPDYFE (134 aa)) are p domain (Extended arm). Over residues 224–240 (PDPEDKKPEDWDERAKI) the composition is skewed to basic and acidic residues. 5 tandem repeats follow at residues 225 to 236 (DPEDKKPEDWDE), 242 to 253 (DPNAVKPEDWDE), 261 to 272 (DEEAEKPEGWLD), 280 to 291 (DPEATKPEDWDD), and 295 to 305 (GMWEAPKIDNP). 4 X approximate repeats stretches follow at residues 225–291 (DPED…DWDD) and 295–352 (GMWE…IPNP). The segment covering 250–281 (DWDEDAPMEIEDEEAEKPEGWLDDEPEEVDDP) has biased composition (acidic residues). C307 and C313 are oxidised to a cystine. A run of 3 repeats spans residues 314–324 (GEWKRPMKRNP), 328–338 (GKWSSPLIDNP), and 342–352 (GIWKPRDIPNP). Residue E371 participates in an alpha-D-glucoside binding. D382 is a binding site for Ca(2+). N464 is a glycosylation site (N-linked (GlcNAc...) asparagine). The helical transmembrane segment at 467 to 487 (IGVLVAIVVVFFSLFLKLIFG) threads the bilayer. The Cytoplasmic segment spans residues 488–530 (GKKAAAPVEKKKPEVAESSKSGDEAEKKEETAAPRKRQPRRDN). The tract at residues 490 to 530 (KAAAPVEKKKPEVAESSKSGDEAEKKEETAAPRKRQPRRDN) is disordered. Residues 495 to 520 (VEKKKPEVAESSKSGDEAEKKEETAA) show a composition bias toward basic and acidic residues. S508 carries the post-translational modification Phosphoserine. Residues 521 to 530 (PRKRQPRRDN) are compositionally biased toward basic residues.

It belongs to the calreticulin family.

It localises to the endoplasmic reticulum membrane. In terms of biological role, calcium-binding protein that interacts with newly synthesized monoglucosylated glycoproteins in the endoplasmic reticulum. It may act in assisting protein assembly and/or in the retention within the ER of unassembled protein subunits. It seems to play a major role in the quality control apparatus of the ER by the retention of incorrectly folded proteins. In Arabidopsis thaliana (Mouse-ear cress), this protein is Calnexin homolog 1 (CNX1).